The sequence spans 335 residues: 5-formaminoimidazole-4-carboxamide-1-(beta)-D-ribofuranosyl 5'-monophosphate synthetase (335 aa).

5-amino-1-(5-phospho-beta-D-ribosyl)imidazole-4-carboxamide-binding residues include His21 and Ser86. The ATP-grasp domain maps to 107-315; sequence RELLRWEADQ…YFDKPMDMGE (209 aa). ATP is bound by residues 137–189 and Glu211; that span reads PTEV…VPAY. Asn231 lines the 5-amino-1-(5-phospho-beta-D-ribosyl)imidazole-4-carboxamide pocket. Residues Glu270 and Glu283 each coordinate Mg(2+).

It belongs to the phosphohexose mutase family. Requires Mg(2+) as cofactor. Mn(2+) is required as a cofactor.

It catalyses the reaction 5-amino-1-(5-phospho-beta-D-ribosyl)imidazole-4-carboxamide + formate + ATP = 5-formamido-1-(5-phospho-D-ribosyl)imidazole-4-carboxamide + ADP + phosphate. It functions in the pathway purine metabolism; IMP biosynthesis via de novo pathway; 5-formamido-1-(5-phospho-D-ribosyl)imidazole-4-carboxamide from 5-amino-1-(5-phospho-D-ribosyl)imidazole-4-carboxamide (formate route): step 1/1. In terms of biological role, catalyzes the ATP- and formate-dependent formylation of 5-aminoimidazole-4-carboxamide-1-beta-d-ribofuranosyl 5'-monophosphate (AICAR) to 5-formaminoimidazole-4-carboxamide-1-beta-d-ribofuranosyl 5'-monophosphate (FAICAR) in the absence of folates. This is 5-formaminoimidazole-4-carboxamide-1-(beta)-D-ribofuranosyl 5'-monophosphate synthetase from Pyrobaculum arsenaticum (strain DSM 13514 / JCM 11321 / PZ6).